The sequence spans 283 residues: 4-diphosphocytidyl-2-C-methyl-D-erythritol kinase (283 aa).

Lys10 is a catalytic residue. 99 to 109 contributes to the ATP binding site; that stretch reads PMGGGLGGGSS. Asp141 is a catalytic residue.

It belongs to the GHMP kinase family. IspE subfamily. In terms of assembly, homodimer.

It catalyses the reaction 4-CDP-2-C-methyl-D-erythritol + ATP = 4-CDP-2-C-methyl-D-erythritol 2-phosphate + ADP + H(+). It functions in the pathway isoprenoid biosynthesis; isopentenyl diphosphate biosynthesis via DXP pathway; isopentenyl diphosphate from 1-deoxy-D-xylulose 5-phosphate: step 3/6. Its function is as follows. Catalyzes the phosphorylation of the position 2 hydroxy group of 4-diphosphocytidyl-2C-methyl-D-erythritol. This Salmonella typhi protein is 4-diphosphocytidyl-2-C-methyl-D-erythritol kinase.